Consider the following 1443-residue polypeptide: Sterol 3-beta-glucosyltransferase ATG26 (1443 aa).

The segment covering 1-13 has biased composition (low complexity); sequence MATQADDAAASQA. Disordered stretches follow at residues 1–69 and 88–187; these read MATQ…MFMN and NDRF…LTLT. Positions 18–32 are enriched in basic and acidic residues; sequence GDLKEHVHDELDKIQ. The span at 49 to 58 shows a compositional bias: acidic residues; it reads DSEDSDDEDN. Over residues 104–117 the composition is skewed to polar residues; the sequence is QNTRTESIARTSIL. Over residues 125–134 the composition is skewed to basic residues; sequence DKVHRRRKLS. The span at 164–173 shows a compositional bias: acidic residues; sequence EVADEADDEH. In terms of domain architecture, GRAM 1 spans 240–284; it reads LKEIFEFDEYEQVIEEYPCWLLQSVLLQGYMYITSKHICFYAYLP. In terms of domain architecture, PH spans 289-385; it reads EAVKSGYLSK…WVKSLQRVIF (97 aa). The segment at 463 to 657 is disordered; sequence EQVITGDDHD…HGDRHHGIPH (195 aa). Residues 506 to 525 are compositionally biased toward low complexity; that stretch reads LAPMSPLSPRSPSQLSPRAS. The segment covering 585–614 has biased composition (polar residues); the sequence is SFLQSSIENPSISTLSPSSYDEPSASQILQ. The segment covering 631-642 has biased composition (basic residues); that stretch reads SRKRDRSGKRTP. Positions 765 to 870 constitute a GRAM 2 domain; sequence RFRAHFALPE…DCAVTLHQLM (106 aa). Residues 883–910 adopt a coiled-coil conformation; that stretch reads DQEEQDDEEAAAAMAERDELQEARQDEF. The UDP-alpha-D-glucose site is built by Ser-957, Arg-958, Asp-960, Ala-1265, His-1267, His-1280, Ser-1283, Gly-1284, Thr-1285, Asp-1304, and Gln-1305. The segment at 1385-1443 is disordered; that stretch reads NAEHGLAEDDDDTEESWTFVGRDEPDPDAVTKKLSDGLAGLGAAGDRPPPLGSQAPTVA. Positions 1405-1419 are enriched in basic and acidic residues; it reads GRDEPDPDAVTKKLS.

Belongs to the glycosyltransferase 28 family.

Its subcellular location is the cytoplasm. It is found in the preautophagosomal structure membrane. The enzyme catalyses a sterol + UDP-alpha-D-glucose = a sterol 3-beta-D-glucoside + UDP + H(+). It catalyses the reaction ergosterol + UDP-alpha-D-glucose = ergosteryl 3-beta-D-glucoside + UDP + H(+). Functionally, sterol glycosyltransferase responsible for the glycosylation of ergosterol to form ergosterol-glucoside. In Gibberella zeae (strain ATCC MYA-4620 / CBS 123657 / FGSC 9075 / NRRL 31084 / PH-1) (Wheat head blight fungus), this protein is Sterol 3-beta-glucosyltransferase ATG26.